Reading from the N-terminus, the 191-residue chain is MSVKIENIRSELLSKNWFKLHKYTFDLIDDNGTSVQQIREVYDRGNGATILLYNRPNGTVLLINQFRMPTYVNGNPDGMLLETCAGLLDNDSPEECIRREAMEETGYQVDSVQKLFEAYMSPGGVTEIIHFFAAEYHADQKVTDDVGVEDEVIEVVELPFTEAIAMIADGRIKDGKTIMLLQYAQIHGLLK.

GDP-alpha-D-mannose-binding positions include 38–40 (IRE), Arg-67, and 85–87 (AGL). Residues 43-180 (DRGNGATILL…RIKDGKTIML (138 aa)) enclose the Nudix hydrolase domain. Positions 85, 100, and 104 each coordinate Mg(2+). Residues 86–106 (GLLDNDSPEECIRREAMEETG) carry the Nudix box motif. GDP-alpha-D-mannose-binding positions include Glu-104, Glu-127, 150-151 (DE), and Lys-176. Glu-151 serves as a coordination point for Mg(2+).

This sequence belongs to the Nudix hydrolase family. NudK subfamily. Homodimer. It depends on Mg(2+) as a cofactor.

It carries out the reaction GDP-alpha-D-mannose + H2O = alpha-D-mannose 1-phosphate + GMP + 2 H(+). In terms of biological role, nucleoside diphosphate sugar hydrolase that hydrolyzes GDP-mannose as its preferred substrate, yielding GMP and mannose-1-phosphate. In Yersinia enterocolitica serotype O:8 / biotype 1B (strain NCTC 13174 / 8081), this protein is GDP-mannose pyrophosphatase (nudK).